Reading from the N-terminus, the 811-residue chain is Vacuolar protein sorting-associated protein 70 (811 aa).

Residues M1–T21 show a composition bias toward basic and acidic residues. A disordered region spans residues M1 to R63. A glycan (N-linked (GlcNAc...) asparagine) is linked at N55. Residues F90–P110 traverse the membrane as a helical segment. N-linked (GlcNAc...) asparagine glycosylation is present at N237. The disordered stretch occupies residues F334–S367. A compositionally biased stretch (low complexity) spans D336–G345. 3 residues coordinate Zn(2+): H445, D456, and D522. Residues N568 and N599 are each glycosylated (N-linked (GlcNAc...) asparagine). H607 is a Zn(2+) binding site. N-linked (GlcNAc...) asparagine glycosylation is present at N670.

This sequence belongs to the peptidase M28 family. M28B subfamily. Zn(2+) serves as cofactor.

The protein localises to the membrane. Involved in vacuolar protein sorting. The sequence is that of Vacuolar protein sorting-associated protein 70 (VPS70) from Saccharomyces cerevisiae (strain ATCC 204508 / S288c) (Baker's yeast).